The sequence spans 200 residues: Molybdenum cofactor guanylyltransferase (200 aa).

Residues 15–17 (LAG), Lys28, Asp74, and Asp104 contribute to the GTP site. Asp104 contributes to the Mg(2+) binding site.

This sequence belongs to the MobA family. Monomer. Requires Mg(2+) as cofactor.

Its subcellular location is the cytoplasm. It catalyses the reaction Mo-molybdopterin + GTP + H(+) = Mo-molybdopterin guanine dinucleotide + diphosphate. Functionally, transfers a GMP moiety from GTP to Mo-molybdopterin (Mo-MPT) cofactor (Moco or molybdenum cofactor) to form Mo-molybdopterin guanine dinucleotide (Mo-MGD) cofactor. The sequence is that of Molybdenum cofactor guanylyltransferase from Pseudomonas fluorescens (strain Pf0-1).